Consider the following 173-residue polypeptide: Putative metal-dependent hydrolase BA_2700/GBAA_2700/BAS2515 (173 aa).

Residues His-65, His-156, and His-160 each contribute to the Zn(2+) site.

The protein belongs to the metal hydrolase YfiT family. In terms of assembly, homodimer. Zn(2+) is required as a cofactor.

It localises to the cytoplasm. Functionally, possible metal-dependent hydrolase. This Bacillus anthracis protein is Putative metal-dependent hydrolase BA_2700/GBAA_2700/BAS2515.